The primary structure comprises 178 residues: Actin-related protein 2/3 complex subunit 3-B (178 aa).

This sequence belongs to the ARPC3 family. In terms of assembly, component of the Arp2/3 complex composed of actr2/arp2, actr3/arp3, arpc1 (arpc1a or arpc1b), arpc2, arpc3, arpc4 and arpc5.

It is found in the cytoplasm. The protein localises to the cytoskeleton. It localises to the cell projection. Its subcellular location is the nucleus. Its function is as follows. Component of the Arp2/3 complex, a multiprotein complex that mediates actin polymerization upon stimulation by nucleation-promoting factor (NPF). The Arp2/3 complex mediates the formation of branched actin networks in the cytoplasm, providing the force for cell motility. In addition to its role in the cytoplasmic cytoskeleton, the Arp2/3 complex also promotes actin polymerization in the nucleus, thereby regulating gene transcription and repair of damaged DNA. The Arp2/3 complex promotes homologous recombination (HR) repair in response to DNA damage by promoting nuclear actin polymerization, leading to drive motility of double-strand breaks (DSBs). The polypeptide is Actin-related protein 2/3 complex subunit 3-B (arpc3-b) (Xenopus laevis (African clawed frog)).